Consider the following 435-residue polypeptide: Phosphomethylpyrimidine synthase (435 aa).

Residues Asn-67, Met-96, Tyr-125, His-163, 185–187, 226–229, and Glu-265 contribute to the substrate site; these read SRG and DGLR. His-269 lines the Zn(2+) pocket. Position 292 (Tyr-292) interacts with substrate. Residue His-333 participates in Zn(2+) binding. Cys-408, Cys-411, and Cys-415 together coordinate [4Fe-4S] cluster.

It belongs to the ThiC family. The cofactor is [4Fe-4S] cluster.

It carries out the reaction 5-amino-1-(5-phospho-beta-D-ribosyl)imidazole + S-adenosyl-L-methionine = 4-amino-2-methyl-5-(phosphooxymethyl)pyrimidine + CO + 5'-deoxyadenosine + formate + L-methionine + 3 H(+). Its pathway is cofactor biosynthesis; thiamine diphosphate biosynthesis. Functionally, catalyzes the synthesis of the hydroxymethylpyrimidine phosphate (HMP-P) moiety of thiamine from aminoimidazole ribotide (AIR) in a radical S-adenosyl-L-methionine (SAM)-dependent reaction. The sequence is that of Phosphomethylpyrimidine synthase from Thermus thermophilus (strain ATCC BAA-163 / DSM 7039 / HB27).